Here is an 84-residue protein sequence, read N- to C-terminus: Large ribosomal subunit protein bL27 (84 aa).

The segment at 1 to 24 (MAHKKGGGSSKNGRDSNSQRLGVK) is disordered.

The protein belongs to the bacterial ribosomal protein bL27 family.

In Leptospira borgpetersenii serovar Hardjo-bovis (strain JB197), this protein is Large ribosomal subunit protein bL27.